A 245-amino-acid chain; its full sequence is uncharacterized protein (245 aa).

Positions 33–176 (QRAAYQQVQA…SSQRDMLTAT (144 aa)) form a coiled coil.

This is an uncharacterized protein from Mycobacterium tuberculosis (strain CDC 1551 / Oshkosh).